Here is a 441-residue protein sequence, read N- to C-terminus: COBRA-like protein 2 (441 aa).

An N-terminal signal peptide occupies residues M1–A28. Residues N37, N162, N170, N209, N234, N249, N314, N329, and N348 are each glycosylated (N-linked (GlcNAc...) asparagine). The GPI-anchor amidated asparagine moiety is linked to residue N417. A propeptide spans A418 to M441 (removed in mature form).

Belongs to the COBRA family. As to expression, expressed in roots, stems, leaves, flowers and siliques.

Its subcellular location is the cell membrane. The chain is COBRA-like protein 2 (COBL2) from Arabidopsis thaliana (Mouse-ear cress).